Reading from the N-terminus, the 308-residue chain is Acetyl-coenzyme A carboxylase carboxyl transferase subunit beta 1 (308 aa).

The 270-residue stretch at 25–294 (VWTKCTSCEQ…PLVVSVNESP (270 aa)) folds into the CoA carboxyltransferase N-terminal domain. Zn(2+) is bound by residues C29, C32, C48, and C51. A C4-type zinc finger spans residues 29-51 (CTSCEQVLYHAELERNLEVCPKC). A disordered region spans residues 288-308 (VSVNESPNEEPYSVPEVDEKG).

The protein belongs to the AccD/PCCB family. Acetyl-CoA carboxylase is a heterohexamer composed of biotin carboxyl carrier protein (AccB), biotin carboxylase (AccC) and two subunits each of ACCase subunit alpha (AccA) and ACCase subunit beta (AccD). Requires Zn(2+) as cofactor.

The protein resides in the cytoplasm. The catalysed reaction is N(6)-carboxybiotinyl-L-lysyl-[protein] + acetyl-CoA = N(6)-biotinyl-L-lysyl-[protein] + malonyl-CoA. It participates in lipid metabolism; malonyl-CoA biosynthesis; malonyl-CoA from acetyl-CoA: step 1/1. Its function is as follows. Component of the acetyl coenzyme A carboxylase (ACC) complex. Biotin carboxylase (BC) catalyzes the carboxylation of biotin on its carrier protein (BCCP) and then the CO(2) group is transferred by the transcarboxylase to acetyl-CoA to form malonyl-CoA. This is Acetyl-coenzyme A carboxylase carboxyl transferase subunit beta 1 from Vibrio parahaemolyticus serotype O3:K6 (strain RIMD 2210633).